The primary structure comprises 147 residues: Large ribosomal subunit protein bL9 (147 aa).

This sequence belongs to the bacterial ribosomal protein bL9 family.

In terms of biological role, binds to the 23S rRNA. The sequence is that of Large ribosomal subunit protein bL9 from Bacteroides fragilis (strain ATCC 25285 / DSM 2151 / CCUG 4856 / JCM 11019 / LMG 10263 / NCTC 9343 / Onslow / VPI 2553 / EN-2).